The chain runs to 544 residues: Chaperonin GroEL (544 aa).

ATP is bound by residues 30–33 (TLGP), Lys-51, 87–91 (DGTTT), Gly-415, and Asp-495.

Belongs to the chaperonin (HSP60) family. As to quaternary structure, forms a cylinder of 14 subunits composed of two heptameric rings stacked back-to-back. Interacts with the co-chaperonin GroES.

It is found in the cytoplasm. It catalyses the reaction ATP + H2O + a folded polypeptide = ADP + phosphate + an unfolded polypeptide.. Together with its co-chaperonin GroES, plays an essential role in assisting protein folding. The GroEL-GroES system forms a nano-cage that allows encapsulation of the non-native substrate proteins and provides a physical environment optimized to promote and accelerate protein folding. The protein is Chaperonin GroEL of Methylobacillus flagellatus (strain ATCC 51484 / DSM 6875 / VKM B-1610 / KT).